We begin with the raw amino-acid sequence, 290 residues long: Virginiamycin B lyase (290 aa).

Histidine 226 serves as a coordination point for substrate. Glutamate 265 serves as a coordination point for Mg(2+). Histidine 267 functions as the Proton acceptor in the catalytic mechanism. Glutamate 282 is a Mg(2+) binding site.

This sequence belongs to the Vgb family. Monomer. Requires Mg(2+) as cofactor.

Inactivates the type B streptogramin antibiotics by linearizing the lactone ring at the ester linkage, generating a free phenylglycine carboxylate and converting the threonyl moiety into 2-amino-butenoic acid. This chain is Virginiamycin B lyase, found in Mycolicibacterium vanbaalenii (strain DSM 7251 / JCM 13017 / BCRC 16820 / KCTC 9966 / NRRL B-24157 / PYR-1) (Mycobacterium vanbaalenii).